The primary structure comprises 141 residues: ATP synthase epsilon chain 1 (141 aa).

This sequence belongs to the ATPase epsilon chain family. In terms of assembly, F-type ATPases have 2 components, CF(1) - the catalytic core - and CF(0) - the membrane proton channel. CF(1) has five subunits: alpha(3), beta(3), gamma(1), delta(1), epsilon(1). CF(0) has three main subunits: a, b and c.

The protein resides in the cell inner membrane. Functionally, produces ATP from ADP in the presence of a proton gradient across the membrane. This is ATP synthase epsilon chain 1 from Paraburkholderia xenovorans (strain LB400).